A 456-amino-acid chain; its full sequence is Ribosomal RNA small subunit methyltransferase F (456 aa).

Residues 109–115 (AAAPGGK), E133, R138, and D177 each bind S-adenosyl-L-methionine. C230 (nucleophile) is an active-site residue.

This sequence belongs to the class I-like SAM-binding methyltransferase superfamily. RsmB/NOP family.

It is found in the cytoplasm. The catalysed reaction is cytidine(1400) in 16S rRNA + S-adenosyl-L-methionine = 5-methylcytidine(1400) in 16S rRNA + S-adenosyl-L-homocysteine + H(+). It catalyses the reaction cytidine(1404) in 16S rRNA + S-adenosyl-L-methionine = 5-methylcytidine(1404) in 16S rRNA + S-adenosyl-L-homocysteine + H(+). The enzyme catalyses cytidine(1407) in 16S rRNA + S-adenosyl-L-methionine = 5-methylcytidine(1407) in 16S rRNA + S-adenosyl-L-homocysteine + H(+). Functionally, specifically methylates the cytosines at positions 1400 (m5C1400), 1404 (m5C1404) and 1407 (m5C1407) of 16S rRNA. C1400, C1404 and C1407 are methylated in a 30S subunit substrate, but only C1400 and C1404 are methylated when naked 16S rRNA is the substrate. Methylation by RsmF may facilitate growth at temperatures outside the optimal growth temperature. This chain is Ribosomal RNA small subunit methyltransferase F, found in Thermus thermophilus (strain ATCC 27634 / DSM 579 / HB8).